Here is a 142-residue protein sequence, read N- to C-terminus: Large ribosomal subunit protein uL11 (142 aa).

Belongs to the universal ribosomal protein uL11 family. As to quaternary structure, part of the ribosomal stalk of the 50S ribosomal subunit. Interacts with L10 and the large rRNA to form the base of the stalk. L10 forms an elongated spine to which L12 dimers bind in a sequential fashion forming a multimeric L10(L12)X complex. In terms of processing, one or more lysine residues are methylated.

Functionally, forms part of the ribosomal stalk which helps the ribosome interact with GTP-bound translation factors. The protein is Large ribosomal subunit protein uL11 of Histophilus somni (strain 129Pt) (Haemophilus somnus).